The chain runs to 149 residues: Transcription antitermination protein NusB (149 aa).

It belongs to the NusB family.

Involved in transcription antitermination. Required for transcription of ribosomal RNA (rRNA) genes. Binds specifically to the boxA antiterminator sequence of the ribosomal RNA (rrn) operons. The chain is Transcription antitermination protein NusB from Hahella chejuensis (strain KCTC 2396).